Reading from the N-terminus, the 94-residue chain is PTS system galactitol-specific EIIB component (94 aa).

A PTS EIIB type-2 domain is found at 1 to 94 (MKRKIIVACG…QNKILTILQG (94 aa)). Residue cysteine 9 is the Phosphocysteine intermediate; for EIIB activity of the active site. Position 9 is a phosphocysteine; by EIIA (cysteine 9).

In terms of assembly, forms a complex with one each of subunit of GatA, GatB and 2 subunits of GatC.

It is found in the cytoplasm. The enzyme catalyses galactitol(out) + N(pros)-phospho-L-histidyl-[protein] = galactitol 1-phosphate(in) + L-histidyl-[protein]. In terms of biological role, the phosphoenolpyruvate-dependent sugar phosphotransferase system (PTS), a major carbohydrate active transport system, catalyzes the phosphorylation of incoming sugar substrates concomitant with their translocation across the cell membrane. The enzyme II complex composed of GatA, GatB and GatC is involved in galactitol transport. This is PTS system galactitol-specific EIIB component (gatB) from Escherichia coli O157:H7.